Reading from the N-terminus, the 295-residue chain is Probable endonuclease 4 (295 aa).

Zn(2+)-binding residues include H78, H118, E154, D188, H191, H225, D238, H240, and E270.

Belongs to the AP endonuclease 2 family. Zn(2+) serves as cofactor.

The enzyme catalyses Endonucleolytic cleavage to 5'-phosphooligonucleotide end-products.. Its function is as follows. Endonuclease IV plays a role in DNA repair. It cleaves phosphodiester bonds at apurinic or apyrimidinic (AP) sites, generating a 3'-hydroxyl group and a 5'-terminal sugar phosphate. This is Probable endonuclease 4 from Vibrio campbellii (strain ATCC BAA-1116).